The sequence spans 160 residues: MVQFYLLTLVFIVVDRFAKLFAINVLRDLPNGIVLVPDWFKLMYAENLGIAFGLRLLPPEGILLLALAISAGLTWYVWISQNRSPLFILTFALILGGGLGNLIDRLIFGHVVDFIYFDIYQGTLFGKYVSLWPIFNIADACITIGACLLFFFHDKIFNPR.

Transmembrane regions (helical) follow at residues 59-79 (PEGILLLALAISAGLTWYVWI) and 84-104 (SPLFILTFALILGGGLGNLID). Catalysis depends on residues Asp-113 and Asp-139. A helical membrane pass occupies residues 132–152 (WPIFNIADACITIGACLLFFF).

Belongs to the peptidase A8 family.

It localises to the cell inner membrane. The catalysed reaction is Release of signal peptides from bacterial membrane prolipoproteins. Hydrolyzes -Xaa-Yaa-Zaa-|-(S,diacylglyceryl)Cys-, in which Xaa is hydrophobic (preferably Leu), and Yaa (Ala or Ser) and Zaa (Gly or Ala) have small, neutral side chains.. Its pathway is protein modification; lipoprotein biosynthesis (signal peptide cleavage). This protein specifically catalyzes the removal of signal peptides from prolipoproteins. In Chlorobaculum parvum (strain DSM 263 / NCIMB 8327) (Chlorobium vibrioforme subsp. thiosulfatophilum), this protein is Lipoprotein signal peptidase.